The following is a 350-amino-acid chain: MSELALRHDWQRDEIEALFALPMNDLLFKAHSIHRQHFDPNEVQISRLLSIKTGACPEDCKYCPQSARYDTGLEKERLIEIEKVLTEARAAKAAGASRFCMGAAWRNPHERDMPYLKDMVSEVKAMGMETCMTLGMLSESQAKDLADAGLDYYNHNLDTSPEYYGDIITTRTYQDRLNTLDNVRAAGMKVCSGGIVGMGEQASDRAGLLQQLANMAKHPESVPINMLVKVAGTPFENLDDLDPLEFVRTIAVARIVMPLSRVRLSAGREKMTDELQAMCFFAGANSIFYGCKLLTTSNPEENEDMTLFKRLGLHPEQGKAGTVEEDKAVFAKAQAVKDKASQPFYDAAAL.

A Radical SAM core domain is found at 41–265 (NEVQISRLLS…VMPLSRVRLS (225 aa)). Residues cysteine 56, cysteine 60, and cysteine 63 each coordinate [4Fe-4S] cluster. Cysteine 100, cysteine 131, cysteine 191, and arginine 263 together coordinate [2Fe-2S] cluster.

The protein belongs to the radical SAM superfamily. Biotin synthase family. As to quaternary structure, homodimer. [4Fe-4S] cluster serves as cofactor. [2Fe-2S] cluster is required as a cofactor.

It catalyses the reaction (4R,5S)-dethiobiotin + (sulfur carrier)-SH + 2 reduced [2Fe-2S]-[ferredoxin] + 2 S-adenosyl-L-methionine = (sulfur carrier)-H + biotin + 2 5'-deoxyadenosine + 2 L-methionine + 2 oxidized [2Fe-2S]-[ferredoxin]. Its pathway is cofactor biosynthesis; biotin biosynthesis; biotin from 7,8-diaminononanoate: step 2/2. Its function is as follows. Catalyzes the conversion of dethiobiotin (DTB) to biotin by the insertion of a sulfur atom into dethiobiotin via a radical-based mechanism. This is Biotin synthase from Shewanella loihica (strain ATCC BAA-1088 / PV-4).